The chain runs to 273 residues: Undecaprenyl-diphosphatase (273 aa).

7 consecutive transmembrane segments (helical) span residues 6-26 (SLLIAAILGVVEGLTEFLPVS), 45-65 (AKTFEVVIQLGSILAVVVMFW), 90-110 (LTLIHILLGMIPAVVLGLVFH), 116-136 (LFNPINVMYALVVGGLLLIAA), 190-210 (YAASEFSFLLAVPMMMGATVL), 222-242 (ADIPMFAVGFVTAFVVALIAI), and 252-272 (ISFIPFAIYRFVVAAAVYVVF).

It belongs to the UppP family.

It localises to the cell inner membrane. The enzyme catalyses di-trans,octa-cis-undecaprenyl diphosphate + H2O = di-trans,octa-cis-undecaprenyl phosphate + phosphate + H(+). Catalyzes the dephosphorylation of undecaprenyl diphosphate (UPP). Confers resistance to bacitracin. This is Undecaprenyl-diphosphatase from Salmonella heidelberg (strain SL476).